The primary structure comprises 276 residues: MEILPIPAESFKVGFIGAGKMAESIARGVVASGVLPPNRICTAVHSNLNRRDVFESFGVNVFSTSEEVVKESDVVIFSVKPQVVKKAVTELKSKLSKNKILVSVAAGIKLNDLQEWSGQDRFIRVMPNTPAAVGEAASVMSLGTGATEEDGAIVAMLFGAVGKILKADEKMFDAVTGLSGSGPAYIFLAIEALADGGVAAGLPRELALSLASQTVLGAATMVSKTGKHPGVLKDDVTSPGGTTIAGVHELEKGSFRATLMNAVVAAAKRSRELSQS.

Belongs to the pyrroline-5-carboxylate reductase family.

The protein resides in the cytoplasm. The catalysed reaction is L-proline + NADP(+) = (S)-1-pyrroline-5-carboxylate + NADPH + 2 H(+). The enzyme catalyses L-proline + NAD(+) = (S)-1-pyrroline-5-carboxylate + NADH + 2 H(+). The protein operates within amino-acid biosynthesis; L-proline biosynthesis; L-proline from L-glutamate 5-semialdehyde: step 1/1. The polypeptide is Pyrroline-5-carboxylate reductase (PROC1) (Arabidopsis thaliana (Mouse-ear cress)).